We begin with the raw amino-acid sequence, 155 residues long: Altered inheritance rate of mitochondria protein 29 (155 aa).

Position 78 is a phosphoserine (serine 78).

Belongs to the UPF0538 family.

It localises to the cytoplasm. In terms of biological role, may be involved in mitochondrial organization and biogenesis. The protein is Altered inheritance rate of mitochondria protein 29 (AIM29) of Saccharomyces cerevisiae (strain ATCC 204508 / S288c) (Baker's yeast).